Consider the following 345-residue polypeptide: Molybdopterin synthase catalytic subunit (345 aa).

Residues 101–102, K117, and 124–126 each bind substrate; these read HR and KKE.

The protein belongs to the MoaE family. MOCS2B subfamily. In terms of assembly, heterotetramer; composed of 2 small (Mocs2A) and 2 large (Mocs2B) subunits.

Its subcellular location is the cytoplasm. The enzyme catalyses 2 [molybdopterin-synthase sulfur-carrier protein]-C-terminal-Gly-aminoethanethioate + cyclic pyranopterin phosphate + H2O = molybdopterin + 2 [molybdopterin-synthase sulfur-carrier protein]-C-terminal Gly-Gly + 2 H(+). The protein operates within cofactor biosynthesis; molybdopterin biosynthesis. Functionally, catalytic subunit of the molybdopterin synthase complex, a complex that catalyzes the conversion of precursor Z into molybdopterin. Acts by mediating the incorporation of 2 sulfur atoms from thiocarboxylated Mocs2A into precursor Z to generate a dithiolene group. This chain is Molybdopterin synthase catalytic subunit, found in Drosophila virilis (Fruit fly).